The sequence spans 162 residues: Transcription elongation factor GreA (162 aa).

Residues 45-74 adopt a coiled-coil conformation; it reads ENAEYEAAREKQAFIEGRIKELEDMTARAE.

It belongs to the GreA/GreB family.

Its function is as follows. Necessary for efficient RNA polymerase transcription elongation past template-encoded arresting sites. The arresting sites in DNA have the property of trapping a certain fraction of elongating RNA polymerases that pass through, resulting in locked ternary complexes. Cleavage of the nascent transcript by cleavage factors such as GreA or GreB allows the resumption of elongation from the new 3'terminus. GreA releases sequences of 2 to 3 nucleotides. The polypeptide is Transcription elongation factor GreA (Rickettsia felis (strain ATCC VR-1525 / URRWXCal2) (Rickettsia azadi)).